Consider the following 586-residue polypeptide: Phosphoenolpyruvate-protein phosphotransferase (586 aa).

The active-site Tele-phosphohistidine intermediate is the histidine 201. Residues arginine 308 and arginine 345 each coordinate phosphoenolpyruvate. Residues glutamate 446 and aspartate 470 each coordinate Mg(2+). Phosphoenolpyruvate-binding positions include 469-470 (ND) and arginine 480. Cysteine 517 acts as the Proton donor in catalysis.

This sequence belongs to the PEP-utilizing enzyme family. As to quaternary structure, homodimer. It depends on Mg(2+) as a cofactor.

The protein localises to the cytoplasm. It catalyses the reaction L-histidyl-[protein] + phosphoenolpyruvate = N(pros)-phospho-L-histidyl-[protein] + pyruvate. General (non sugar-specific) component of the phosphoenolpyruvate-dependent sugar phosphotransferase system (sugar PTS). This major carbohydrate active-transport system catalyzes the phosphorylation of incoming sugar substrates concomitantly with their translocation across the cell membrane. Enzyme I transfers the phosphoryl group from phosphoenolpyruvate (PEP) to the phosphoryl carrier protein (HPr). This chain is Phosphoenolpyruvate-protein phosphotransferase, found in Cupriavidus necator (strain ATCC 17699 / DSM 428 / KCTC 22496 / NCIMB 10442 / H16 / Stanier 337) (Ralstonia eutropha).